The following is a 144-amino-acid chain: Large ribosomal subunit protein uL13 (144 aa).

It belongs to the universal ribosomal protein uL13 family. Part of the 50S ribosomal subunit.

Functionally, this protein is one of the early assembly proteins of the 50S ribosomal subunit, although it is not seen to bind rRNA by itself. It is important during the early stages of 50S assembly. The sequence is that of Large ribosomal subunit protein uL13 from Clostridium perfringens (strain ATCC 13124 / DSM 756 / JCM 1290 / NCIMB 6125 / NCTC 8237 / Type A).